The primary structure comprises 853 residues: ATP-dependent zinc metalloprotease FtsH (853 aa).

At 1-5 (MKNKK) the chain is on the cytoplasmic side. A helical transmembrane segment spans residues 6 to 26 (YLQFGGIAAVILIVLFLVSLF). Residues 27–113 (SSDTRNFQEV…SYTTNVTQES (87 aa)) are Extracellular-facing. A helical membrane pass occupies residues 114 to 134 (FLMSMLSFILPMVIIFGLLMF). Over 135–853 (FLTRMQGGGM…NPENEGDNRG (719 aa)) the chain is Cytoplasmic. Position 205–212 (205–212 (GPPGTGKT)) interacts with ATP. Histidine 427 lines the Zn(2+) pocket. Glutamate 428 is an active-site residue. Histidine 431 and aspartate 503 together coordinate Zn(2+). Composition is skewed to basic and acidic residues over residues 619-632 (ESTR…REPV) and 639-648 (ALERGEEPPK). Residues 619–853 (ESTRFPRQEN…NPENEGDNRG (235 aa)) are disordered. Low complexity predominate over residues 677–695 (PASSAGVAPAAGAAAGSYG). 2 stretches are compositionally biased toward polar residues: residues 728-739 (TPAQAPEQSPDS) and 770-788 (MDQS…QESP). The segment covering 796 to 813 (LPDHERSDYPEKAQKESV) has biased composition (basic and acidic residues).

The protein in the central section; belongs to the AAA ATPase family. It in the C-terminal section; belongs to the peptidase M41 family. In terms of assembly, homohexamer. The cofactor is Zn(2+).

Its subcellular location is the cell membrane. In terms of biological role, acts as a processive, ATP-dependent zinc metallopeptidase for both cytoplasmic and membrane proteins. Plays a role in the quality control of integral membrane proteins. This is ATP-dependent zinc metalloprotease FtsH from Corynebacterium glutamicum (strain ATCC 13032 / DSM 20300 / JCM 1318 / BCRC 11384 / CCUG 27702 / LMG 3730 / NBRC 12168 / NCIMB 10025 / NRRL B-2784 / 534).